The sequence spans 159 residues: ATP synthase subunit b (159 aa).

The chain crosses the membrane as a helical span at residues 7-27; it reads DFIWTLINFFVLLFILKILLY.

The protein belongs to the ATPase B chain family. As to quaternary structure, F-type ATPases have 2 components, F(1) - the catalytic core - and F(0) - the membrane proton channel. F(1) has five subunits: alpha(3), beta(3), gamma(1), delta(1), epsilon(1). F(0) has three main subunits: a(1), b(2) and c(10-14). The alpha and beta chains form an alternating ring which encloses part of the gamma chain. F(1) is attached to F(0) by a central stalk formed by the gamma and epsilon chains, while a peripheral stalk is formed by the delta and b chains.

It is found in the cell membrane. Its function is as follows. F(1)F(0) ATP synthase produces ATP from ADP in the presence of a proton or sodium gradient. F-type ATPases consist of two structural domains, F(1) containing the extramembraneous catalytic core and F(0) containing the membrane proton channel, linked together by a central stalk and a peripheral stalk. During catalysis, ATP synthesis in the catalytic domain of F(1) is coupled via a rotary mechanism of the central stalk subunits to proton translocation. In terms of biological role, component of the F(0) channel, it forms part of the peripheral stalk, linking F(1) to F(0). The chain is ATP synthase subunit b from Carboxydothermus hydrogenoformans (strain ATCC BAA-161 / DSM 6008 / Z-2901).